Consider the following 234-residue polypeptide: MLFSPPLQRATLIQRYKRFLADVITPDGTTLTLHCPNTGAMTGCATPGDTVWYSTSENTKRKYPHTWELTETQFGAFICVNTLRANQLTKEAIQENRLPALAGYNILKSEVKYGAERSRIDFMLQADFRPDCYIEVKSVTLAEKENGYFPDAITERGQKHLRELMGVAAAGHRAVVVFAVLHSAITRFSPARHIDIKYAQLLSEAQNKGVEVLAYKAELSAQKMELNEPVPITL.

Residues 201–220 constitute a DNA-binding region (H-T-H motif); it reads LLSEAQNKGVEVLAYKAELS.

The protein belongs to the SfsA family.

In terms of biological role, binds to DNA non-specifically. Could be a regulatory factor involved in maltose metabolism. The sequence is that of Sugar fermentation stimulation protein A from Salmonella choleraesuis (strain SC-B67).